Reading from the N-terminus, the 290-residue chain is Enoyl-CoA hydratase, mitochondrial (290 aa).

The N-terminal 27 residues, 1–27, are a transit peptide targeting the mitochondrion; that stretch reads MAALRALLPRACSSLLSSVRCPELRRF. Residue 98 to 101 participates in substrate binding; it reads ADIK. Lys101 bears the N6-acetyllysine; alternate mark. Position 101 is an N6-succinyllysine; alternate (Lys101). The residue at position 114 (Ser114) is a Phosphoserine. Lys115 bears the N6-acetyllysine; alternate mark. Lys115 bears the N6-succinyllysine; alternate mark. Gly141 lines the substrate pocket. An N6-succinyllysine modification is found at Lys204. At Lys211 the chain carries N6-acetyllysine. An N6-acetyllysine; alternate modification is found at Lys217. N6-succinyllysine; alternate is present on Lys217.

The protein belongs to the enoyl-CoA hydratase/isomerase family. In terms of assembly, homohexamer; dimer of trimers. Acetylation of Lys-101 is observed in liver mitochondria from fasted mice but not from fed mice.

It is found in the mitochondrion matrix. The enzyme catalyses a (3S)-3-hydroxyacyl-CoA = a (2E)-enoyl-CoA + H2O. It carries out the reaction a (3E)-enoyl-CoA = a 4-saturated (2E)-enoyl-CoA. The catalysed reaction is (3E)-hexenoyl-CoA = (2E)-hexenoyl-CoA. It catalyses the reaction (3S)-3-hydroxybutanoyl-CoA = (2E)-butenoyl-CoA + H2O. The enzyme catalyses 3-hydroxyisovaleryl-CoA = 3-methylbut-2-enoyl-CoA + H2O. It carries out the reaction 3-hydroxypropanoyl-CoA = acryloyl-CoA + H2O. The catalysed reaction is 3-hydroxybutanoyl-CoA = (2E)-butenoyl-CoA + H2O. It catalyses the reaction 2-methylpropenoyl-CoA + H2O = (S)-3-hydroxyisobutanoyl-CoA. The enzyme catalyses (3S)-hydroxyhexanoyl-CoA = (2E)-hexenoyl-CoA + H2O. It carries out the reaction (3S)-hydroxydecanoyl-CoA = (2E)-decenoyl-CoA + H2O. It functions in the pathway lipid metabolism; fatty acid beta-oxidation. In terms of biological role, converts unsaturated trans-2-enoyl-CoA species ((2E)-enoyl-CoA) to the corresponding (3S)-3-hydroxyacyl-CoA species through addition of a water molecule to the double bond. Catalyzes the hydration of medium- and short-chained fatty enoyl-CoA thioesters from 4 carbons long (C4) up to C16. Has high substrate specificity for crotonyl-CoA ((2E)-butenoyl-CoA) and moderate specificity for acryloyl-CoA, 3-methylcrotonyl-CoA (3-methyl-(2E)-butenoyl-CoA) and methacrylyl-CoA ((2E)-2-methylpropenoyl-CoA). Can bind tiglyl-CoA (2-methylcrotonoyl-CoA), but hydrates only a small amount of this substrate. Plays a key role in the beta-oxidation spiral of short- and medium-chain fatty acid oxidation. At a lower rate than the hydratase reaction, catalyzes the isomerase reaction of trans-3-enoyl-CoA species (such as (3E)-hexenoyl-CoA) to trans-2-enoyl-CoA species (such as (2E)-hexenoyl-CoA), which are subsequently hydrated to 3(S)-3-hydroxyacyl-CoA species (such as (3S)-hydroxyhexanoyl-CoA). This is Enoyl-CoA hydratase, mitochondrial from Mus musculus (Mouse).